The primary structure comprises 160 residues: Phosphopantetheine adenylyltransferase (160 aa).

S9 is a substrate binding site. Residues 9-10 and H17 each bind ATP; that span reads SF. Substrate contacts are provided by K41, V73, and K87. Residues 88–90, E98, and 122–128 each bind ATP; these read GLR and YSFVSSS.

It belongs to the bacterial CoaD family. Homohexamer. The cofactor is Mg(2+).

The protein localises to the cytoplasm. The enzyme catalyses (R)-4'-phosphopantetheine + ATP + H(+) = 3'-dephospho-CoA + diphosphate. It participates in cofactor biosynthesis; coenzyme A biosynthesis; CoA from (R)-pantothenate: step 4/5. Reversibly transfers an adenylyl group from ATP to 4'-phosphopantetheine, yielding dephospho-CoA (dPCoA) and pyrophosphate. This is Phosphopantetheine adenylyltransferase from Mycobacterium leprae (strain TN).